A 99-amino-acid chain; its full sequence is ATP-dependent Clp protease adapter protein ClpS (99 aa).

The protein belongs to the ClpS family. Binds to the N-terminal domain of the chaperone ClpA.

Involved in the modulation of the specificity of the ClpAP-mediated ATP-dependent protein degradation. This Acetivibrio thermocellus (strain ATCC 27405 / DSM 1237 / JCM 9322 / NBRC 103400 / NCIMB 10682 / NRRL B-4536 / VPI 7372) (Clostridium thermocellum) protein is ATP-dependent Clp protease adapter protein ClpS.